The sequence spans 187 residues: Elongation factor P (187 aa).

The protein belongs to the elongation factor P family.

The protein localises to the cytoplasm. It functions in the pathway protein biosynthesis; polypeptide chain elongation. Its function is as follows. Involved in peptide bond synthesis. Stimulates efficient translation and peptide-bond synthesis on native or reconstituted 70S ribosomes in vitro. Probably functions indirectly by altering the affinity of the ribosome for aminoacyl-tRNA, thus increasing their reactivity as acceptors for peptidyl transferase. The sequence is that of Elongation factor P from Wolinella succinogenes (strain ATCC 29543 / DSM 1740 / CCUG 13145 / JCM 31913 / LMG 7466 / NCTC 11488 / FDC 602W) (Vibrio succinogenes).